A 372-amino-acid polypeptide reads, in one-letter code: N-methyl-L-tryptophan oxidase (372 aa).

Asp4–His34 contacts FAD. S-8alpha-FAD cysteine is present on Cys308.

Belongs to the MSOX/MTOX family. MTOX subfamily. As to quaternary structure, monomer. Requires FAD as cofactor.

It catalyses the reaction N(alpha)-methyl-L-tryptophan + O2 + H2O = L-tryptophan + formaldehyde + H2O2. In terms of biological role, catalyzes the oxidative demethylation of N-methyl-L-tryptophan. This chain is N-methyl-L-tryptophan oxidase, found in Escherichia coli O7:K1 (strain IAI39 / ExPEC).